We begin with the raw amino-acid sequence, 257 residues long: Imidazole glycerol phosphate synthase subunit HisF (257 aa).

Residues Asp-11 and Asp-130 contribute to the active site.

Belongs to the HisA/HisF family. Heterodimer of HisH and HisF.

Its subcellular location is the cytoplasm. It catalyses the reaction 5-[(5-phospho-1-deoxy-D-ribulos-1-ylimino)methylamino]-1-(5-phospho-beta-D-ribosyl)imidazole-4-carboxamide + L-glutamine = D-erythro-1-(imidazol-4-yl)glycerol 3-phosphate + 5-amino-1-(5-phospho-beta-D-ribosyl)imidazole-4-carboxamide + L-glutamate + H(+). It participates in amino-acid biosynthesis; L-histidine biosynthesis; L-histidine from 5-phospho-alpha-D-ribose 1-diphosphate: step 5/9. IGPS catalyzes the conversion of PRFAR and glutamine to IGP, AICAR and glutamate. The HisF subunit catalyzes the cyclization activity that produces IGP and AICAR from PRFAR using the ammonia provided by the HisH subunit. This Aliivibrio salmonicida (strain LFI1238) (Vibrio salmonicida (strain LFI1238)) protein is Imidazole glycerol phosphate synthase subunit HisF.